The primary structure comprises 198 residues: ATP-dependent Clp protease proteolytic subunit 2 (198 aa).

The active-site Nucleophile is S94. The active site involves H119.

It belongs to the peptidase S14 family. In terms of assembly, fourteen ClpP subunits assemble into 2 heptameric rings which stack back to back to give a disk-like structure with a central cavity, resembling the structure of eukaryotic proteasomes.

It is found in the cytoplasm. It carries out the reaction Hydrolysis of proteins to small peptides in the presence of ATP and magnesium. alpha-casein is the usual test substrate. In the absence of ATP, only oligopeptides shorter than five residues are hydrolyzed (such as succinyl-Leu-Tyr-|-NHMec, and Leu-Tyr-Leu-|-Tyr-Trp, in which cleavage of the -Tyr-|-Leu- and -Tyr-|-Trp bonds also occurs).. Functionally, cleaves peptides in various proteins in a process that requires ATP hydrolysis. Has a chymotrypsin-like activity. Plays a major role in the degradation of misfolded proteins. This chain is ATP-dependent Clp protease proteolytic subunit 2, found in Borreliella burgdorferi (strain ATCC 35210 / DSM 4680 / CIP 102532 / B31) (Borrelia burgdorferi).